We begin with the raw amino-acid sequence, 130 residues long: Hypocretin neuropeptide precursor (130 aa).

Residues 1–32 form the signal peptide; sequence MNFPSTKVPWAAVTLLLLLLLPPALLSLGVDA. Gln-33 carries the post-translational modification Pyrrolidone carboxylic acid. 2 disulfides stabilise this stretch: Cys-38-Cys-44 and Cys-39-Cys-46. Position 65 is a leucine amide (Leu-65). Met-96 carries the methionine amide modification. Residues 97 to 130 constitute a propeptide that is removed on maturation; the sequence is GRRAGAELEPHPCSGRGCPTVTTTALAPRGGSGV.

It belongs to the orexin family. In terms of processing, specific enzymatic cleavages at paired basic residues yield the different active peptides. Restricted to neuronal cell bodies of the dorsal and lateral hypothalamus.

The protein localises to the rough endoplasmic reticulum. It is found in the cytoplasmic vesicle. Its subcellular location is the synapse. Functionally, neuropeptides that play a significant role in the regulation of food intake and sleep-wakefulness, possibly by coordinating the complex behavioral and physiologic responses of these complementary homeostatic functions. A broader role in the homeostatic regulation of energy metabolism, autonomic function, hormonal balance and the regulation of body fluids, is also suggested. In terms of biological role, binds to orexin receptors HCRTR1/OX1R and HCRTR2/OX2R with a high affinity. Stimulates food intake. Modulates pituitary luteinizing hormone secretion in an ovarian steroid-dependent manner. Its function is as follows. Binds to orexin receptor HCRTR2/OX2R only. Stimulates food intake. Modulates pituitary luteinizing hormone secretion in an ovarian steroid-dependent manner. This is Hypocretin neuropeptide precursor (Hcrt) from Mus musculus (Mouse).